The following is a 333-amino-acid chain: MKCPSREVFSKFEESTNPQWGKPPSQRSTEEYIKYSLVILDKPRGPSSHEVAAWVKKILGVERAGHAGTLDPKVSGVLPIAIAEGTKVLMALSRSDKVYVAVAKFHGDVDEDKLRAVLQEFQGVIYQKPPLRSAVKRQLRTRRVYSLDLLELDGRYAVIKMHVEAGTYARKIIHDIGEVLGVGANMRELRRIAVSCYTEDEAVTLQDIADAYYIWKHYGDDTYLRRVLLPIEEIARHLPKIWVRDSAVDAICNGAPLAAPGISKFETPFSKGDLVAMFTLKGELIGIGRALVGSEEVKKMERGLVARTDRVVMRRGTYPAMWKRKAKSQSDSA.

A compositionally biased stretch (basic and acidic residues) spans 1 to 14 (MKCPSREVFSKFEE). Residues 1-27 (MKCPSREVFSKFEESTNPQWGKPPSQR) form a disordered region. Residue Asp71 is the Nucleophile of the active site. Residues 238 to 313 (LPKIWVRDSA…LVARTDRVVM (76 aa)) form the PUA domain.

It belongs to the pseudouridine synthase TruB family. Type 2 subfamily.

It carries out the reaction uridine(55) in tRNA = pseudouridine(55) in tRNA. Functionally, could be responsible for synthesis of pseudouridine from uracil-55 in the psi GC loop of transfer RNAs. This Pyrobaculum aerophilum (strain ATCC 51768 / DSM 7523 / JCM 9630 / CIP 104966 / NBRC 100827 / IM2) protein is Probable tRNA pseudouridine synthase B.